The primary structure comprises 237 residues: Large ribosomal subunit protein uL22m (237 aa).

The protein belongs to the universal ribosomal protein uL22 family.

It is found in the mitochondrion. This Dictyostelium discoideum (Social amoeba) protein is Large ribosomal subunit protein uL22m (mrpl22).